Consider the following 343-residue polypeptide: tRNA N6-adenosine threonylcarbamoyltransferase (343 aa).

Fe cation-binding residues include His115 and His119. Substrate is bound by residues 138–142 (LVSGA), Asp171, Gly184, and Asn276. Asp304 contributes to the Fe cation binding site.

Belongs to the KAE1 / TsaD family. It depends on Fe(2+) as a cofactor.

It localises to the cytoplasm. The catalysed reaction is L-threonylcarbamoyladenylate + adenosine(37) in tRNA = N(6)-L-threonylcarbamoyladenosine(37) in tRNA + AMP + H(+). Functionally, required for the formation of a threonylcarbamoyl group on adenosine at position 37 (t(6)A37) in tRNAs that read codons beginning with adenine. Is involved in the transfer of the threonylcarbamoyl moiety of threonylcarbamoyl-AMP (TC-AMP) to the N6 group of A37, together with TsaE and TsaB. TsaD likely plays a direct catalytic role in this reaction. This Buchnera aphidicola subsp. Cinara cedri (strain Cc) protein is tRNA N6-adenosine threonylcarbamoyltransferase.